Consider the following 184-residue polypeptide: Ribosome-recycling factor (184 aa).

This sequence belongs to the RRF family.

The protein localises to the cytoplasm. Responsible for the release of ribosomes from messenger RNA at the termination of protein biosynthesis. May increase the efficiency of translation by recycling ribosomes from one round of translation to another. In Borrelia turicatae (strain 91E135), this protein is Ribosome-recycling factor.